The primary structure comprises 207 residues: MKTKILNLANEEIGEISLNEDIFAVEFIRDDIIKQVVDWQRAKAMAGTHKTKTVSEVSGTTKKPFKQKGTGNARQGSLRSVQMRGGGVIHGPVVRSHATKLPKKVRKLGLIHALSEKFSEGKLLVIDSLKLETPKTSNLVNILNKFQGKSFFVIDGNEVDVNFSLAAQNIYNTVVVPQIGANVYDIIRHEYVLLSQEAVNVLEERLK.

A disordered region spans residues 53-76 (TVSEVSGTTKKPFKQKGTGNARQG).

It belongs to the universal ribosomal protein uL4 family. As to quaternary structure, part of the 50S ribosomal subunit.

Its function is as follows. One of the primary rRNA binding proteins, this protein initially binds near the 5'-end of the 23S rRNA. It is important during the early stages of 50S assembly. It makes multiple contacts with different domains of the 23S rRNA in the assembled 50S subunit and ribosome. Functionally, forms part of the polypeptide exit tunnel. The sequence is that of Large ribosomal subunit protein uL4 from Rickettsia bellii (strain OSU 85-389).